The following is a 374-amino-acid chain: Aminomethyltransferase (374 aa).

This sequence belongs to the GcvT family. The glycine cleavage system is composed of four proteins: P, T, L and H.

The enzyme catalyses N(6)-[(R)-S(8)-aminomethyldihydrolipoyl]-L-lysyl-[protein] + (6S)-5,6,7,8-tetrahydrofolate = N(6)-[(R)-dihydrolipoyl]-L-lysyl-[protein] + (6R)-5,10-methylene-5,6,7,8-tetrahydrofolate + NH4(+). Its function is as follows. The glycine cleavage system catalyzes the degradation of glycine. The chain is Aminomethyltransferase from Prochlorococcus marinus (strain MIT 9313).